Here is a 484-residue protein sequence, read N- to C-terminus: Major extracellular endoglucanase (484 aa).

The first 25 residues, 1–25 (MSIFRTASTLALATALALAAGPAFS), serve as a signal peptide directing secretion. Residue Glu-182 is the Proton donor of the active site. Glu-303 serves as the catalytic Nucleophile. Residues 370 to 402 (GTAGNTTPTPTPTPTPTPTPTPTPTPTPTPGTS) are disordered. The segment at 375–399 (TTPTPTPTPTPTPTPTPTPTPTPTP) is thr-Pro repeats ('hinge') (Pro-Thr box). Residues 378-398 (TPTPTPTPTPTPTPTPTPTPT) are compositionally biased toward pro residues. The 90-residue stretch at 395 to 484 (PTPTPGTSTF…TAEFGFCAAS (90 aa)) folds into the CBM2 domain.

Belongs to the glycosyl hydrolase 5 (cellulase A) family.

The catalysed reaction is Endohydrolysis of (1-&gt;4)-beta-D-glucosidic linkages in cellulose, lichenin and cereal beta-D-glucans.. The protein is Major extracellular endoglucanase (engXCA) of Xanthomonas campestris pv. campestris (strain ATCC 33913 / DSM 3586 / NCPPB 528 / LMG 568 / P 25).